A 435-amino-acid polypeptide reads, in one-letter code: Trigger factor (435 aa).

The 86-residue stretch at 163–248 folds into the PPIase FKBP-type domain; sequence GDFVTFDFKG…IKEIKVKELP (86 aa).

This sequence belongs to the FKBP-type PPIase family. Tig subfamily.

The protein resides in the cytoplasm. It carries out the reaction [protein]-peptidylproline (omega=180) = [protein]-peptidylproline (omega=0). Involved in protein export. Acts as a chaperone by maintaining the newly synthesized protein in an open conformation. Functions as a peptidyl-prolyl cis-trans isomerase. This chain is Trigger factor, found in Citrifermentans bemidjiense (strain ATCC BAA-1014 / DSM 16622 / JCM 12645 / Bem) (Geobacter bemidjiensis).